Here is a 562-residue protein sequence, read N- to C-terminus: Solute carrier family 22 member 6 (562 aa).

The Cytoplasmic portion of the chain corresponds to 1 to 15 (MPFSELLEQVGSTGR). Residues 16–36 (FQVLHVTLLCIPVLMMASHNL) form a helical membrane-spanning segment. The Extracellular portion of the chain corresponds to 37-147 (LQNFVATVPS…LVCDMHSFKQ (111 aa)). Residues 148–168 (MGQTIYMGGVLVGALLFGGLS) form a helical membrane-spanning segment. Over 169 to 174 (DRYGRR) the chain is Cytoplasmic. Residues 175 to 195 (ILLLISNLLMAVSGTCAAFSS) traverse the membrane as a helical segment. Topologically, residues 196–205 (SFSLFCVFRF) are extracellular. A helical transmembrane segment spans residues 206-226 (GCGLALSGLGLNTFSLIVEWI). The Cytoplasmic segment spans residues 227 to 235 (PTRIRTAVG). The chain crosses the membrane as a helical span at residues 236 to 256 (TTTGYCYTLGQLILVLLAYFI). Residues 257-260 (RDWR) lie on the Extracellular side of the membrane. A helical membrane pass occupies residues 261 to 281 (WLTLAVSLPFYVFFLIAWWFH). Residues 282 to 351 (ESSRWLALSN…FNTPAMRKRT (70 aa)) are Cytoplasmic-facing. The chain crosses the membrane as a helical span at residues 352–372 (LCLSAVWLSTSFAYYGLAMDL). Topologically, residues 373 to 378 (DKFGVD) are extracellular. Residues 379 to 399 (IYLIQVIFGAVDIPAKVVVVV) traverse the membrane as a helical segment. The Cytoplasmic portion of the chain corresponds to 400 to 408 (SMSLIGRRR). The helical transmembrane segment at 409–429 (SQCAVLVVAGITILLNLLVPY) threads the bilayer. Residues 430–444 (DKQTIRTCLAVLGKG) are Extracellular-facing. Residues 445 to 465 (CLAASFNCCYLYSGELFPTII) form a helical membrane-spanning segment. Residues 466-468 (RQN) are Cytoplasmic-facing. The helical transmembrane segment at 469–489 (GMGWVSMMARIGAMVAPMVLL) threads the bilayer. Topologically, residues 490–495 (TRDYIP) are extracellular. A helical membrane pass occupies residues 496–516 (WLPGLIYGGAPILSGLAAIFL). Residues 517–562 (PETLGYPLPDTIQDVEESGSGRKSKMSTKETITLQDKQANLLKQSA) lie on the Cytoplasmic side of the membrane.

The protein belongs to the major facilitator (TC 2.A.1) superfamily. Organic cation transporter (TC 2.A.1.19) family. Post-translationally, glycosylated. Glycosylation is necessary for proper targeting of the transporter to the plasma membrane.

It is found in the cell membrane. Its subcellular location is the basolateral cell membrane. It localises to the basal cell membrane. Its function is as follows. Involved in the renal elimination of endogenous and exogenous organic anions. Functions as organic anion exchanger when the uptake of one molecule of organic anion is coupled with an efflux of one molecule of endogenous dicarboxylic acid (glutarate, ketoglutarate, etc). Mediates the sodium-independent uptake of p-aminohippurate (PAH), 2,3-dimercapto-1-propanesulfonic acid (DMPS), cidofovir, adefovir, 9-(2-phosphonylmethoxyethyl) guanine (PMEG), 9-(2-phosphonylmethoxyethyl) diaminopurine (PMEDAP), ochratoxin (OTA), acyclovir (ACV), 3'-azido-3-'deoxythymidine (AZT), cimetidine (CMD), 2,4-dichloro-phenoxyacetate (2,4-D), hippurate (HA), indoleacetate (IA), indoxyl sulfate (IS), 3-carboxy-4-methyl-5-propyl-2-furanpropionate (CMPF) and edaravone sulfate. Mediates the sodium-independent uptake of p-aminohippurate (PAH). PAH uptake is inhibited by p-chloromercuribenzenesulphonate (PCMBS), diethyl pyrocarbonate (DEPC), indomethacin, sulindac, diclofenac, carprofen, okadaic acid, benzothiazolylcysteine (BTC), S-chlorotrifluoroethylcysteine (CTFC), cysteine S-conjugates S-dichlorovinylcysteine (DCVC), furosemide, steviol, phorbol 12-myristate 13-acetate (PMA), calcium ionophore A23187, benzylpenicillin, bumetamide, losartan, probenecid, phenol red, urate, glutarate and alpha-ketoglutarate. PAH uptake is inhibited by glutarate. The protein is Solute carrier family 22 member 6 (SLC22A6) of Pseudopleuronectes americanus (Winter flounder).